A 349-amino-acid chain; its full sequence is Phenylalanine--tRNA ligase alpha subunit (349 aa).

A Mg(2+)-binding site is contributed by Glu-261.

This sequence belongs to the class-II aminoacyl-tRNA synthetase family. Phe-tRNA synthetase alpha subunit type 1 subfamily. In terms of assembly, tetramer of two alpha and two beta subunits. Mg(2+) serves as cofactor.

The protein localises to the cytoplasm. The enzyme catalyses tRNA(Phe) + L-phenylalanine + ATP = L-phenylalanyl-tRNA(Phe) + AMP + diphosphate + H(+). The sequence is that of Phenylalanine--tRNA ligase alpha subunit from Leuconostoc citreum (strain KM20).